A 257-amino-acid chain; its full sequence is Phosphate import ATP-binding protein PstB (257 aa).

Residues leucine 11–isoleucine 252 enclose the ABC transporter domain. Glycine 43–serine 50 contributes to the ATP binding site.

It belongs to the ABC transporter superfamily. Phosphate importer (TC 3.A.1.7) family. As to quaternary structure, the complex is composed of two ATP-binding proteins (PstB), two transmembrane proteins (PstC and PstA) and a solute-binding protein (PstS).

Its subcellular location is the cell inner membrane. It catalyses the reaction phosphate(out) + ATP + H2O = ADP + 2 phosphate(in) + H(+). Part of the ABC transporter complex PstSACB involved in phosphate import. Responsible for energy coupling to the transport system. The polypeptide is Phosphate import ATP-binding protein PstB (Chromobacterium violaceum (strain ATCC 12472 / DSM 30191 / JCM 1249 / CCUG 213 / NBRC 12614 / NCIMB 9131 / NCTC 9757 / MK)).